The primary structure comprises 2472 residues: Centrosomal protein of 290 kDa (2472 aa).

A self-association (with itself or C-terminus) region spans residues 1–689; that stretch reads MPPNIKWKEL…MESKNAEGIF (689 aa). 3 coiled-coil regions span residues 59–747, 1129–1392, and 1459–1492; these read MKMK…LRQS, RQRI…QQSK, and QVILKTQATCKSLEEKLKEKESALRLAEQNILSR. The segment at 128–164 is disordered; that stretch reads DRELEDMEKELDKEKKVNEQLALRNEEAENENSKLRR. A compositionally biased stretch (basic and acidic residues) spans 137–164; the sequence is ELDKEKKVNEQLALRNEEAENENSKLRR. Residues 690–890 form an interaction with IQCB1 region; it reads DASLHLKAQV…TVLQVNEKSL (201 aa). Disordered stretches follow at residues 1691 to 1713 and 2451 to 2472; these read AHKDSQSLKSELQAQKEANSRAP and PSPLAASEHSEDGESPHSFPIY. The segment covering 1697-1713 has biased composition (polar residues); sequence SLKSELQAQKEANSRAP. Residues 1960–2472 form a self-association (with itself or N-terminus) region; it reads TTGMTVDQVL…GESPHSFPIY (513 aa).

As to quaternary structure, part of the tectonic-like complex (also named B9 complex). Interacts with ATF4 via its N-terminal region. Associates with the BBSome complex, interacting (via N-terminus) with BBS4. Interacts with IQCB1/NPHP5; IQCB1 and CEP290/NPHP6 are proposed to form a functional NPHP5-6 module localized to the centrosome. Interacts with NPHP4; the interaction likely requires additional interactors. Interacts with ZNF423, FAM161A, CEP162, CEP162, CEP131, TALPID3, CCDC13, CC2D2A, RPGRIP1. Can self-associate (homo- or heteromeric). Interacts with CCP110; required for suppressing cilia formation. Interacts with RPGR. Associates (via C-terminus) with microtubules; association to microtubule is reduced in response to cellular stress, such as ultraviolet light (UV) radiation or heat shock, in a process that requires p38 MAP kinase signaling. Interacts with FAM161A. Interacts with PCM1. Interacts with CCDC66. Interacts with ARMC9 and CSPP1. Ubiquitinated. May undergo monoubiquitination; monoubiquitination is inhibited in response to cellular stress, such as ultraviolet light (UV) radiation or heat shock, but does not cause its displacement from centriolar satellites. Expressed in multiple organs during early postnatal development, with highest levels in hindbrain.

It is found in the cytoplasm. The protein resides in the cytoskeleton. It localises to the microtubule organizing center. The protein localises to the centrosome. Its subcellular location is the centriolar satellite. It is found in the nucleus. The protein resides in the centriole. It localises to the cell projection. The protein localises to the cilium. Its subcellular location is the cilium basal body. It is found in the cytoplasmic vesicle. Functionally, involved in early and late steps in cilia formation. Its association with CCP110 is required for inhibition of primary cilia formation by CCP110. May play a role in early ciliogenesis in the disappearance of centriolar satellites and in the transition of primary ciliar vesicles (PCVs) to capped ciliary vesicles (CCVs). Required for the centrosomal recruitment of RAB8A and for the targeting of centriole satellite proteins to centrosomes such as of PCM1. Required for the correct localization of ciliary and phototransduction proteins in retinal photoreceptor cells; may play a role in ciliary transport processes. Required for efficient recruitment of RAB8A to primary cilium. In the ciliary transition zone is part of the tectonic-like complex (also named B9 complex) which is required for tissue-specific ciliogenesis and may regulate ciliary membrane composition. Involved in regulation of the BBSome complex integrity, specifically for presence of BBS2, BBS5 and BBS8/TTC8 in the complex, and in ciliary targeting of selected BBSome cargos. May play a role in controlling entry of the BBSome complex to cilia possibly implicating IQCB1/NPHP5. Activates ATF4-mediated transcription. This chain is Centrosomal protein of 290 kDa, found in Mus musculus (Mouse).